Here is a 240-residue protein sequence, read N- to C-terminus: Uridylate kinase (240 aa).

Residue 13–16 participates in ATP binding; sequence KASG. The tract at residues 21–26 is involved in allosteric activation by GTP; it reads GGQGFG. Gly-55 contacts UMP. Positions 56 and 60 each coordinate ATP. UMP-binding positions include Asp-75 and 136–143; that span reads TGNPFFTT. ATP-binding residues include Thr-163, Gln-164, Tyr-169, and Asp-172.

This sequence belongs to the UMP kinase family. In terms of assembly, homohexamer.

Its subcellular location is the cytoplasm. The enzyme catalyses UMP + ATP = UDP + ADP. It participates in pyrimidine metabolism; CTP biosynthesis via de novo pathway; UDP from UMP (UMPK route): step 1/1. With respect to regulation, allosterically activated by GTP. Inhibited by UTP. Functionally, catalyzes the reversible phosphorylation of UMP to UDP. In Rhizobium johnstonii (strain DSM 114642 / LMG 32736 / 3841) (Rhizobium leguminosarum bv. viciae), this protein is Uridylate kinase.